The chain runs to 835 residues: Protein translocase subunit SecA (835 aa).

ATP contacts are provided by residues Gln-85, 103 to 107 (GEGKT), and Asp-492. A disordered region spans residues 788–807 (VQGEAVHPSSDGEEAKKKPV). 4 residues coordinate Zn(2+): Cys-819, Cys-821, Cys-830, and Cys-831.

It belongs to the SecA family. In terms of assembly, monomer and homodimer. Part of the essential Sec protein translocation apparatus which comprises SecA, SecYEG and auxiliary proteins SecDF. Other proteins may also be involved. Zn(2+) is required as a cofactor.

The protein localises to the cell membrane. Its subcellular location is the cytoplasm. It catalyses the reaction ATP + H2O + cellular proteinSide 1 = ADP + phosphate + cellular proteinSide 2.. Its function is as follows. Part of the Sec protein translocase complex. Interacts with the SecYEG preprotein conducting channel. Has a central role in coupling the hydrolysis of ATP to the transfer of proteins into and across the cell membrane, serving as an ATP-driven molecular motor driving the stepwise translocation of polypeptide chains across the membrane. The chain is Protein translocase subunit SecA from Bacillus cereus (strain ATCC 10987 / NRS 248).